A 239-amino-acid chain; its full sequence is ATP synthase subunit a (239 aa).

The next 5 membrane-spanning stretches (helical) occupy residues 13-33, 75-95, 113-133, 174-194, and 208-230; these read IWFD…VFAF, FHLM…LGLV, DPIV…FFGM, GNIF…ASVG, and WVAF…SMVY.

It belongs to the ATPase A chain family. In terms of assembly, F-type ATPases have 2 components, CF(1) - the catalytic core - and CF(0) - the membrane proton channel. CF(1) has five subunits: alpha(3), beta(3), gamma(1), delta(1), epsilon(1). CF(0) has three main subunits: a(1), b(2) and c(9-12). The alpha and beta chains form an alternating ring which encloses part of the gamma chain. CF(1) is attached to CF(0) by a central stalk formed by the gamma and epsilon chains, while a peripheral stalk is formed by the delta and b chains.

It localises to the cell membrane. Its function is as follows. Key component of the proton channel; it plays a direct role in the translocation of protons across the membrane. The protein is ATP synthase subunit a of Enterococcus faecalis (strain ATCC 700802 / V583).